The chain runs to 113 residues: uncharacterized protein (113 aa).

2 helical membrane passes run 1 to 21 and 48 to 68; these read MLIAGTLCVCAAVISAVFGTW and IMLAAGGVVALVAVAHTALIV.

The protein to M.tuberculosis Rv0039.

The protein resides in the cell membrane. This is an uncharacterized protein from Mycobacterium leprae (strain TN).